Here is a 572-residue protein sequence, read N- to C-terminus: EF-hand calcium-binding domain-containing protein 12 (572 aa).

Disordered stretches follow at residues 62 to 85 (VPRK…KPIP) and 146 to 169 (EQSA…PRLS). The region spanning 196–231 (SRKIKILEIFHKVGQGENQRITREEFIAAVKAVGVP) is the EF-hand domain. Glu212 contacts Ca(2+).

The chain is EF-hand calcium-binding domain-containing protein 12 (EFCAB12) from Homo sapiens (Human).